We begin with the raw amino-acid sequence, 320 residues long: MAKYRIMTFDGGGTLGALSLQLLNRLARQNPKLISRTHVFSGNSIGSFTALALASGRSPRETLQYFEDEILPAFSISRPGGPVFNQQLPYSGFIKAVRNFFPADLQLIDLRKRIVVPSFKLYSQKLDRWTPVLFHNFPGSPYLNEKVSDVILRSSGAPATQRAYQNYVDGYVVATNPSTASIAFAVGKANVPLDQIAVLSIGTGEAPTRLRRDTRGWGMVSADNIRPENLKNLPPNWGVLLDRSPNEPLLPFLQMIAGGNGYYESMVSANLLGDRFFRLDPRIPNFSKTDPAVVPAVIEIANKTNLQPANQFIEKNWGSK.

The PNPLA domain occupies 7-182 (MTFDGGGTLG…VATNPSTASI (176 aa)). The GXGXXG signature appears at 11–16 (GGGTLG). Residues 42-46 (GNSIG) carry the GXSXG motif. Serine 44 serves as the catalytic Nucleophile. Residue aspartate 169 is the Proton acceptor of the active site.

The protein resides in the spore coat. This is Putative sporulation hydrolase CotR (cotR) from Bacillus subtilis (strain 168).